The sequence spans 133 residues: Large ribosomal subunit protein eL14 (133 aa).

It belongs to the eukaryotic ribosomal protein eL14 family.

This chain is Large ribosomal subunit protein eL14 (RPL14), found in Griffithsia japonica (Red alga).